We begin with the raw amino-acid sequence, 531 residues long: Peroxinectin A (531 aa).

The signal sequence occupies residues 1-21 (MRLNLISFFIIFTILVSISNS). Residue Asn-62 is glycosylated (N-linked (GlcNAc...) asparagine). The active-site Proton acceptor is the His-101. Residues Asn-131 and Asn-338 are each glycosylated (N-linked (GlcNAc...) asparagine).

The protein belongs to the peroxidase family.

The protein localises to the secreted. It carries out the reaction 2 a phenolic donor + H2O2 = 2 a phenolic radical donor + 2 H2O. The sequence is that of Peroxinectin A (poxA) from Dictyostelium discoideum (Social amoeba).